The chain runs to 601 residues: COP9 signalosome complex subunit 1 (601 aa).

Residues 1–10 show a composition bias toward acidic residues; the sequence is MQNELLDDPM. Disordered stretches follow at residues 1–54 and 268–294; these read MQNE…LDNP and DADDAEKNSQQSQQAPPQRGENAPYMV. Residues 14-24 are compositionally biased toward low complexity; the sequence is APAAEAAAADE. Residues 338-500 form the PCI domain; it reads TILQIKTECL…GIVRILDERD (163 aa). Residues 535 to 581 are disordered; the sequence is SISDKETRPKRKNQKESAKFDRNFGGIDVDEDPRGIAGPSGLSDDFN.

This sequence belongs to the CSN1 family. In terms of assembly, component of the CSN complex, probably composed of csn-1, csn-2, csn-3, csn-4, csn-5, csn-6 and csn-7. Within the complex it probably interacts directly with csn-2, csn-4 and csn-5. May interact with itself. Interacts with rbx-1.

It localises to the cytoplasm. The protein resides in the nucleus. Essential component of the COP9 signalosome complex (CSN), a complex involved in various cellular and developmental processes. The CSN complex is an essential regulator of the ubiquitin (Ubl) conjugation pathway by mediating the deneddylation of the cullin subunits of the SCF-type E3 ligase complexes, leading to decrease the Ubl ligase activity of SCF. The CSN complex plays an essential role in embryogenesis and oogenesis and is required to regulate microtubule stability in the early embryo. Mediates mei-3/katanin targeting for degradation at the meiosis to mitosis transition via deneddylation of cul-3. The polypeptide is COP9 signalosome complex subunit 1 (csn-1) (Caenorhabditis elegans).